The chain runs to 234 residues: Membrane glycoprotein RL11 (234 aa).

Residues 1–23 form the signal peptide; the sequence is MQTYSTPLTLIIVTSLFLFTTQG. A helical transmembrane segment spans residues 183 to 203; sequence LHCAWVSGLMIFVGALVICFL.

The protein localises to the host membrane. In Human cytomegalovirus (strain Merlin) (HHV-5), this protein is Membrane glycoprotein RL11 (RL11).